A 145-amino-acid polypeptide reads, in one-letter code: D-aminoacyl-tRNA deacylase (145 aa).

The Gly-cisPro motif, important for rejection of L-amino acids motif lies at 137 to 138; that stretch reads GP.

This sequence belongs to the DTD family. As to quaternary structure, homodimer.

The protein localises to the cytoplasm. The catalysed reaction is glycyl-tRNA(Ala) + H2O = tRNA(Ala) + glycine + H(+). It catalyses the reaction a D-aminoacyl-tRNA + H2O = a tRNA + a D-alpha-amino acid + H(+). Functionally, an aminoacyl-tRNA editing enzyme that deacylates mischarged D-aminoacyl-tRNAs. Also deacylates mischarged glycyl-tRNA(Ala), protecting cells against glycine mischarging by AlaRS. Acts via tRNA-based rather than protein-based catalysis; rejects L-amino acids rather than detecting D-amino acids in the active site. By recycling D-aminoacyl-tRNA to D-amino acids and free tRNA molecules, this enzyme counteracts the toxicity associated with the formation of D-aminoacyl-tRNA entities in vivo and helps enforce protein L-homochirality. The sequence is that of D-aminoacyl-tRNA deacylase from Shewanella loihica (strain ATCC BAA-1088 / PV-4).